The chain runs to 83 residues: U2-hexatoxin-Hi1a (83 aa).

The signal sequence occupies residues 1–23; it reads MRNTTFLVLNVMLLVSVALFCAA. A propeptide spanning residues 24-45 is cleaved from the precursor; that stretch reads DPEMEKSSFAEILDTGNPEQER. 4 cysteine pairs are disulfide-bonded: cysteine 47/cysteine 63, cysteine 54/cysteine 68, cysteine 62/cysteine 78, and cysteine 70/cysteine 76.

It belongs to the neurotoxin 07 (Beta/delta-agtx) family. Expressed by the venom gland.

It localises to the secreted. In terms of biological role, inhibits sodium channels (Nav) of insects. This Hadronyche infensa (Fraser island funnel-web spider) protein is U2-hexatoxin-Hi1a.